A 787-amino-acid polypeptide reads, in one-letter code: Longitudinals lacking protein, isoforms A/B/D/L (787 aa).

A BTB domain is found at V32–Q97. 4 disordered regions span residues L115–L200, S228–S340, A506–K560, and T653–G677. Low complexity-rich tracts occupy residues S162 to P175, S228 to T251, T263 to S293, N329 to S340, H537 to K560, and S659 to S668. Residues H685–E707 form a C2H2-type 1; degenerate zinc finger. The C2H2-type 2 zinc finger occupies F714–H737.

In terms of assembly, isoform D interacts with JIL-1. In terms of tissue distribution, by stage 11, isoform B is expressed throughout the mesoderm, whereas isoform A, isoform D and isoform L are expressed throughout the ectoderm. Expression becomes restricted during later stages; starting from stage 14 to 16, isoform B is expressed in muscle. Isoform A, isoform D, and at low levels isoform B, are expressed in the CNS. Expression is also seen in specific types of cells in the embryo; isoform A and isoform L are expressed in a dynamic pattern in the ventral neurogenic region starting at stage 7. Isoform L is expressed around the tracheal pits at stage 11.

It is found in the nucleus. Putative transcription factor required for axon growth and guidance in the central and peripheral nervous systems. Repels CNS axons away from the midline by promoting the expression of the midline repellent sli and its receptor robo. The polypeptide is Longitudinals lacking protein, isoforms A/B/D/L (Drosophila melanogaster (Fruit fly)).